Reading from the N-terminus, the 295-residue chain is Oxidoreductase AN1597 (295 aa).

Belongs to the asaB hydroxylase/desaturase family.

It functions in the pathway secondary metabolite biosynthesis; terpenoid biosynthesis. Functionally, oxidoreductase; part of the gene cluster that mediates the biosynthesis of the diterpene ent-pimara-8(14),15-diene (PD). Within the cluster, the HMG-CoA reductase AN1593 functions in the mevalonate pathway, which produces isoprenoid precursors. The geranylgeranyl pyrophosphate (GGPP) synthase AN1592 is needed in the formation of GGPP, the precursor for diterpenes. Lastly, the pimaradiene synthase pbcA performs the 2 cyclization steps that convert GGPP to ent-pimara-8(14),15-diene. The putative roles of the remaining cluster enzymes in ent-pimara-8(14),15-diene biosynthesis is unclear. The cytochrome P450 monooxygenase AN1598, the glutathione S-transferase AN1595, the oxidoreductases AN1596 and AN1597 probably function as decorative enzymes. It is possible that in biological conditions the compound is oxidized to ent-pimara-8(14),15-dien-19-oic acid, which is a bioactive diterpene compound predominant in many plant extracts. The sequence is that of Oxidoreductase AN1597 from Emericella nidulans (strain FGSC A4 / ATCC 38163 / CBS 112.46 / NRRL 194 / M139) (Aspergillus nidulans).